A 123-amino-acid polypeptide reads, in one-letter code: MPTINQLVRKGRTPQKVKSKVPAMDANPQKRGVCTRVYTTTPKKPNSALRKVAKVRLTNAREVITYIPGEGHNLQEHSVVLIRGGRVRDLPGVRYHVLRGVLDTQGVKDRKQSRSKYGAKRPK.

Residues 1-24 are disordered; it reads MPTINQLVRKGRTPQKVKSKVPAM. The segment covering 9 to 19 has biased composition (basic residues); sequence RKGRTPQKVKS. A 3-methylthioaspartic acid modification is found at Asp-89.

The protein belongs to the universal ribosomal protein uS12 family. As to quaternary structure, part of the 30S ribosomal subunit. Contacts proteins S8 and S17. May interact with IF1 in the 30S initiation complex.

In terms of biological role, with S4 and S5 plays an important role in translational accuracy. Interacts with and stabilizes bases of the 16S rRNA that are involved in tRNA selection in the A site and with the mRNA backbone. Located at the interface of the 30S and 50S subunits, it traverses the body of the 30S subunit contacting proteins on the other side and probably holding the rRNA structure together. The combined cluster of proteins S8, S12 and S17 appears to hold together the shoulder and platform of the 30S subunit. The polypeptide is Small ribosomal subunit protein uS12 (Sphingopyxis alaskensis (strain DSM 13593 / LMG 18877 / RB2256) (Sphingomonas alaskensis)).